We begin with the raw amino-acid sequence, 424 residues long: Dihydroorotase (424 aa).

2 residues coordinate Zn(2+): H61 and H63. Substrate is bound by residues 63 to 65 (HLR) and N95. Zn(2+) contacts are provided by D153, H180, and H233. N279 contacts substrate. D306 contacts Zn(2+). D306 is a catalytic residue. Substrate is bound at residue H310.

It belongs to the metallo-dependent hydrolases superfamily. DHOase family. Class I DHOase subfamily. The cofactor is Zn(2+).

The enzyme catalyses (S)-dihydroorotate + H2O = N-carbamoyl-L-aspartate + H(+). Its pathway is pyrimidine metabolism; UMP biosynthesis via de novo pathway; (S)-dihydroorotate from bicarbonate: step 3/3. Functionally, catalyzes the reversible cyclization of carbamoyl aspartate to dihydroorotate. The protein is Dihydroorotase of Geobacter metallireducens (strain ATCC 53774 / DSM 7210 / GS-15).